The following is a 260-amino-acid chain: MVLIRVLANLLILQLSYAQKSSELVIGGDECNINEHPFLVALYDAWSGRFLCGGTLINPEWVLTAAHCDSKNFKMKLGAHSKKVLNEDEQIRNPKEKFICPNKKNDEVLDKDIMLIKLDSPVSYSEHIAPLSLPSSPPSVGSVCRIMGWGSITPVEETFPDVPHCANINLLDDVECKPGYPELLPEYRTLCAGVLQGGIDTCGFDSGTPLICNGQFQGIVSYGGHPCGQSRKPGIYTKVFDYNAWIQSIIAGNTAATCLP.

Positions 1 to 18 are cleaved as a signal peptide; sequence MVLIRVLANLLILQLSYA. Residues 19 to 24 constitute a propeptide that is removed on maturation; sequence QKSSEL. The 227-residue stretch at 25-251 folds into the Peptidase S1 domain; the sequence is VIGGDECNIN…YNAWIQSIIA (227 aa). Disulfide bonds link Cys-31-Cys-165, Cys-52-Cys-68, Cys-100-Cys-258, Cys-144-Cys-212, Cys-176-Cys-191, and Cys-202-Cys-227. Active-site charge relay system residues include His-67 and Asp-112. Catalysis depends on Ser-206, which acts as the Charge relay system.

This sequence belongs to the peptidase S1 family. Snake venom subfamily. In terms of assembly, monomer. In terms of tissue distribution, expressed by the venom gland.

It localises to the secreted. The catalysed reaction is Selective cleavage of Arg-|-Xaa bond in fibrinogen, to form fibrin, and release fibrinopeptide A. The specificity of further degradation of fibrinogen varies with species origin of the enzyme.. With respect to regulation, inhibited by alpha(2)-macroglobulin, diisopropylfluorophosphate (DFP) and PMSF. Low inhibition by tosyl-L-lysine chloromethyl ketone. Its function is as follows. Thrombin-like snake venom serine protease that clots fibrinogen (FGA) by releasing fibrinopeptide A. According to PubMed:8585090, only cleaves rabbit fibrinogen, whereas no specificity is described in PubMed:3910643 (tests done on bovine fibrinogen). Also acts as a C3 convertase that independently cleaves human C3 and kick-starts the complement cascade. Also increases urokinase-type plasminogen activator (PLAU) and plasminogen activator inhibitor (SERPINE1) in cultured bovine pulmonary artery endothelial cells. Dose-dependently inhibits collagen-induced platelet aggregation. This Protobothrops flavoviridis (Habu) protein is Thrombin-like enzyme flavoxobin (TLF1).